The following is a 358-amino-acid chain: Trace amine-associated receptor 7e (358 aa).

The Extracellular segment spans residues 1 to 47 (MATGDDSFLWDQDSILSRDLFSATSAELCYENLNRSCVRSPYSPGPR). N-linked (GlcNAc...) asparagine glycosylation occurs at N34. 2 disulfide bridges follow: C37–C201 and C120–C205. A helical membrane pass occupies residues 48–68 (LILYAVFGFGAVLAVCGNLLV). Residues 69–83 (MTSILHFRQLHSPAN) lie on the Cytoplasmic side of the membrane. Residues 84-104 (FLVASLACADFLVGLTVMPFS) form a helical membrane-spanning segment. Over 105 to 121 (TVRSVEGCWYFGEIYCK) the chain is Extracellular. Residues 122 to 143 (LHTCFDVSFCSSSIFHLCFISV) traverse the membrane as a helical segment. At 144-166 (DRYIAVSDPLIYPTRFTASVSNK) the chain is on the cytoplasmic side. Residues 167–187 (CITFSWLLSISYGFSLIYTGA) traverse the membrane as a helical segment. Residues 188–212 (SEAGLEDLVSALTCVGGCQLAVNQS) are Extracellular-facing. The N-linked (GlcNAc...) asparagine glycan is linked to N210. A helical transmembrane segment spans residues 213–233 (WVFINFLLFLIPTLVMITVYS). The Cytoplasmic segment spans residues 234–274 (KIFLIAKQQAQNIEKMSKQTARASDSYKDRVAKRERKAAKT). A helical membrane pass occupies residues 275–295 (LGIAVAAFLLSWLPYFIDSFI). At 296-309 (DAFLGFITPTYVYE) the chain is on the extracellular side. Residues 310–333 (ILVWIAYYNSAMNPLIYAFFYPWF) form a helical membrane-spanning segment. Over 334 to 358 (RKAIKLTVTGKILRENSSTTNLFPE) the chain is Cytoplasmic.

This sequence belongs to the G-protein coupled receptor 1 family. As to expression, specifically expressed in neurons of the olfactory epithelium.

Its subcellular location is the cell membrane. Olfactory receptor specific for N,N-dimethylalkylamines trace amines. Trace amine compounds are enriched in animal body fluids and act on trace amine-associated receptors (TAARs) to elicit both intraspecific and interspecific innate behaviors. Ligand-binding causes a conformation change that triggers signaling via G(s)-class of G alpha proteins (GNAL or GNAS). This is Trace amine-associated receptor 7e from Mus musculus (Mouse).